The chain runs to 389 residues: 23S rRNA (uracil(747)-C(5))-methyltransferase RlmC (389 aa).

Residues Cys-5, Cys-13, Cys-16, and Cys-94 each contribute to the [4Fe-4S] cluster site. S-adenosyl-L-methionine contacts are provided by Gln-219, Phe-248, Glu-275, and Asn-321. Cys-348 acts as the Nucleophile in catalysis.

Belongs to the class I-like SAM-binding methyltransferase superfamily. RNA M5U methyltransferase family. RlmC subfamily.

It catalyses the reaction uridine(747) in 23S rRNA + S-adenosyl-L-methionine = 5-methyluridine(747) in 23S rRNA + S-adenosyl-L-homocysteine + H(+). In terms of biological role, catalyzes the formation of 5-methyl-uridine at position 747 (m5U747) in 23S rRNA. This is 23S rRNA (uracil(747)-C(5))-methyltransferase RlmC from Mannheimia succiniciproducens (strain KCTC 0769BP / MBEL55E).